Here is a 66-residue protein sequence, read N- to C-terminus: ATP synthase protein 8 (66 aa).

Residues 8–24 (TWLMMIMSMFLALFIIF) form a helical membrane-spanning segment. Position 54 is an N6-acetyllysine; alternate (Lys54). Lys54 carries the N6-succinyllysine; alternate modification. Residue Lys57 is modified to N6-acetyllysine.

It belongs to the ATPase protein 8 family. As to quaternary structure, F-type ATPases have 2 components, CF(1) - the catalytic core - and CF(0) - the membrane proton channel. Component of an ATP synthase complex composed of ATP5PB, ATP5MC1, ATP5F1E, ATP5PD, ATP5ME, ATP5PF, ATP5MF, MT-ATP6, MT-ATP8, ATP5F1A, ATP5F1B, ATP5F1D, ATP5F1C, ATP5PO, ATP5MG, ATP5MK and ATP5MJ. Interacts with PRICKLE3.

It is found in the mitochondrion membrane. In terms of biological role, mitochondrial membrane ATP synthase (F(1)F(0) ATP synthase or Complex V) produces ATP from ADP in the presence of a proton gradient across the membrane which is generated by electron transport complexes of the respiratory chain. F-type ATPases consist of two structural domains, F(1) - containing the extramembraneous catalytic core and F(0) - containing the membrane proton channel, linked together by a central stalk and a peripheral stalk. During catalysis, ATP synthesis in the catalytic domain of F(1) is coupled via a rotary mechanism of the central stalk subunits to proton translocation. Part of the complex F(0) domain. Minor subunit located with subunit a in the membrane. The polypeptide is ATP synthase protein 8 (MT-ATP8) (Cervus elaphus hippelaphus (European red deer)).